Here is a 92-residue protein sequence, read N- to C-terminus: MRVSLAALAFLLTLAVLHSEANEEPAGNMRVCCFSSVTRKIPLSLVKNYERTGDKCPQEAVIFQTRSGRSICANPGQAWVQKYIEYLDQMSK.

The signal sequence occupies residues 1 to 21 (MRVSLAALAFLLTLAVLHSEA). 2 disulfides stabilise this stretch: Cys-32–Cys-56 and Cys-33–Cys-72.

This sequence belongs to the intercrine beta (chemokine CC) family. As to expression, plasma serum.

The protein resides in the secreted. Chemotactic activity for neutrophils and lymphocytes. Binds to heparin. In Bos taurus (Bovine), this protein is Regakine-1.